A 452-amino-acid polypeptide reads, in one-letter code: tRNA modification GTPase MnmE (452 aa).

The (6S)-5-formyl-5,6,7,8-tetrahydrofolate site is built by R21, E78, and K118. The region spanning 214-375 (GMKAVIAGRP…LREHLKTSMG (162 aa)) is the TrmE-type G domain. N224 is a binding site for K(+). GTP-binding positions include 224-229 (NAGKSS), 243-249 (TNIAGTT), and 268-271 (DTAG). S228 lines the Mg(2+) pocket. Residues T243, I245, and T248 each coordinate K(+). Mg(2+) is bound at residue T249. Residue K452 coordinates (6S)-5-formyl-5,6,7,8-tetrahydrofolate.

It belongs to the TRAFAC class TrmE-Era-EngA-EngB-Septin-like GTPase superfamily. TrmE GTPase family. As to quaternary structure, homodimer. Heterotetramer of two MnmE and two MnmG subunits. Requires K(+) as cofactor.

It is found in the cytoplasm. Functionally, exhibits a very high intrinsic GTPase hydrolysis rate. Involved in the addition of a carboxymethylaminomethyl (cmnm) group at the wobble position (U34) of certain tRNAs, forming tRNA-cmnm(5)s(2)U34. The protein is tRNA modification GTPase MnmE of Haemophilus ducreyi (strain 35000HP / ATCC 700724).